Reading from the N-terminus, the 339-residue chain is Glyceraldehyde-3-phosphate dehydrogenase (339 aa).

Residues 11 to 12 (TI) and Gly-110 contribute to the NAD(+) site. 139-141 (SCN) is a D-glyceraldehyde 3-phosphate binding site. The Nucleophile role is filled by Cys-140. An NAD(+)-binding site is contributed by Arg-168. Residue 194 to 195 (HG) coordinates D-glyceraldehyde 3-phosphate. Gln-301 contributes to the NAD(+) binding site.

It belongs to the glyceraldehyde-3-phosphate dehydrogenase family. In terms of assembly, homotetramer.

It localises to the cytoplasm. The enzyme catalyses D-glyceraldehyde 3-phosphate + phosphate + NADP(+) = (2R)-3-phospho-glyceroyl phosphate + NADPH + H(+). It catalyses the reaction D-glyceraldehyde 3-phosphate + phosphate + NAD(+) = (2R)-3-phospho-glyceroyl phosphate + NADH + H(+). The protein operates within carbohydrate degradation; glycolysis; pyruvate from D-glyceraldehyde 3-phosphate: step 1/5. The chain is Glyceraldehyde-3-phosphate dehydrogenase from Methanospirillum hungatei JF-1 (strain ATCC 27890 / DSM 864 / NBRC 100397 / JF-1).